The following is a 499-amino-acid chain: Thioredoxin reductase 1, cytoplasmic (499 aa).

Residues 22–23 (SG), 42–43 (DF), 58–59 (TC), and 63–67 (SCIPK) contribute to the FAD site. C59 and C64 form a disulfide bridge. K68 is modified (N6-succinyllysine). At Y131 the chain carries Phosphotyrosine. FAD contacts are provided by residues 131–132 (YG) and T161. NADP(+) is bound by residues R166, 198-204 (ASYVALE), 221-222 (RS), R226, 226-228 (RGF), 292-293 (GR), and K315. Y200 contacts FAD. FAD-binding positions include D334, 341–343 (ELT), and H472. Residue E341 coordinates NADP(+). H472 serves as the catalytic Proton acceptor. Positions 497 to 498 (CU) form a cross-link, cysteinyl-selenocysteine (Cys-Sec). A non-standard amino acid (selenocysteine) is located at residue U498.

This sequence belongs to the class-I pyridine nucleotide-disulfide oxidoreductase family. As to quaternary structure, homodimer. The cofactor is FAD. ISGylated.

It is found in the cytoplasm. It catalyses the reaction [thioredoxin]-dithiol + NADP(+) = [thioredoxin]-disulfide + NADPH + H(+). The catalysed reaction is H2O2 + NADPH + H(+) = NADP(+) + 2 H2O. In terms of biological role, reduces disulfideprotein thioredoxin (Trx) to its dithiol-containing form. Homodimeric flavoprotein involved in the regulation of cellular redox reactions, growth and differentiation. Contains a selenocysteine residue at the C-terminal active site that is essential for catalysis. Also has reductase activity on hydrogen peroxide (H2O2). This is Thioredoxin reductase 1, cytoplasmic (TXNRD1) from Sus scrofa (Pig).